Consider the following 63-residue polypeptide: MAVPKRKTSRMKRGFRRSADAIKAPTYIEDKDSGELRRPHHVDLKTGMYRGRQIFTPKVREEA.

The span at 1-16 (MAVPKRKTSRMKRGFR) shows a compositional bias: basic residues. Residues 1–22 (MAVPKRKTSRMKRGFRRSADAI) are disordered.

This sequence belongs to the bacterial ribosomal protein bL32 family.

This is Large ribosomal subunit protein bL32 from Beijerinckia indica subsp. indica (strain ATCC 9039 / DSM 1715 / NCIMB 8712).